The sequence spans 734 residues: ABC transporter D family member 1 (734 aa).

Helical transmembrane passes span 52–72 (IIKI…ILFG), 112–132 (FAIG…SIMA), 177–197 (FTTL…VVVY), and 204–224 (TTID…GYLI). In terms of domain architecture, ABC transmembrane type-1 spans 63–351 (PLTLFLILFG…VEEEQAKIQF (289 aa)). Residues 271 to 286 (HPEKRFDNNDYDHGYE) show a composition bias toward basic and acidic residues. The tract at residues 271-296 (HPEKRFDNNDYDHGYESDDSDQSCDE) is disordered. Residues 332 to 359 (DSNDQKEELLVEEEQAKIQFEALLKNKK) are a coiled coil. The chain crosses the membrane as a helical span at residues 374 to 394 (LFTYLSPIANYFIIAIPVFFL). The ABC transporter domain maps to 492–729 (ITLDDVTYFT…NNNNTNKIAE (238 aa)). 525-532 (GPSGSGKS) lines the ATP pocket. A compositionally biased stretch (low complexity) spans 712-725 (QSNNINNNNNNNTN). Residues 712-734 (QSNNINNNNNNNTNKIAEDSVFD) are disordered.

It belongs to the ABC transporter superfamily. ABCD family. Peroxisomal fatty acyl CoA transporter (TC 3.A.1.203) subfamily.

It is found in the membrane. The enzyme catalyses (9Z)-octadecenoyl-CoA(in) = (9Z)-octadecenoyl-CoA(out). This Dictyostelium discoideum (Social amoeba) protein is ABC transporter D family member 1 (abcD1).